Here is a 623-residue protein sequence, read N- to C-terminus: Sodium-coupled monocarboxylate transporter 2 (623 aa).

The Extracellular portion of the chain corresponds to 1–10 (METVGRFQAG). A helical membrane pass occupies residues 11–31 (DYVVFACLFVVSSGIGVFFAI). Residues 32–50 (KERNKAPSKEFLVGGRQMS) lie on the Cytoplasmic side of the membrane. Residues 51–71 (CGPVALSLTASFMSAVTVIGA) traverse the membrane as a helical segment. The Extracellular portion of the chain corresponds to 72-83 (PADVYRFGASYV). A helical membrane pass occupies residues 84 to 104 (IFGVAYTFVVFFTAELFLPVF). Residues 105-129 (YRSGITSTYEYLELRFCKLVRVAAT) are Cytoplasmic-facing. Residues 130–150 (LIYIIQTILYTGVVVYAPALA) form a helical membrane-spanning segment. The Extracellular segment spans residues 151–158 (LNQVTGFD). Residues 159 to 179 (LWGSIFATGIVCTFYCTLGGL) traverse the membrane as a helical segment. The Cytoplasmic segment spans residues 180 to 181 (KA). A helical membrane pass occupies residues 182-202 (VVWTDAFQMVVMVVGFLTVLI). At 203-236 (QGSSRAGGIENVWSTSRTGGRLQVFDFDVSPLRR) the chain is on the extracellular side. A helical transmembrane segment spans residues 237–257 (HTFWTLSVGGTFTWLGIYGVN). At 258 to 276 (QSTIQRCISCKTEGHARWA) the chain is on the cytoplasmic side. Residues 277-297 (LYLNLLGLWIILFCAVVSGLI) form a helical membrane-spanning segment. Over 298 to 322 (MYSYYSHCDPWSSGLISAPDQLMPY) the chain is Extracellular. The chain crosses the membrane as a helical span at residues 323 to 343 (FVMEILGAFPGLPGLFVACAF). The Cytoplasmic portion of the chain corresponds to 344 to 386 (SGTLSTVAASINALATVMYEDFVSQCFPDLSNRAASWISKALC). A helical transmembrane segment spans residues 387 to 407 (VAFGVACTTMAVAASYMGGIV). Residues 408–412 (QAALS) lie on the Extracellular side of the membrane. Residues 413–433 (IHGMCGGPVLGLFSLGILFPF) form a helical membrane-spanning segment. Topologically, residues 434–438 (TNLKG) are cytoplasmic. A helical membrane pass occupies residues 439 to 459 (AVGGLIVGISLSFWVGVGAFI). The Extracellular segment spans residues 460–510 (YPAPSNNTHALELNTAGCNITAAAFEPTSATVTQLTSDRNWLADSWYSMSY). N-linked (GlcNAc...) asparagine glycans are attached at residues N465 and N478. A helical membrane pass occupies residues 511-531 (LYYSAVGFIGTVAAGLLITLL). The Cytoplasmic portion of the chain corresponds to 532–623 (TGPMDPKLLK…NETSIVQKKL (92 aa)).

It belongs to the sodium:solute symporter (SSF) (TC 2.A.21) family.

It is found in the apical cell membrane. It catalyses the reaction (S)-lactate(out) + Na(+)(out) = (S)-lactate(in) + Na(+)(in). The enzyme catalyses nicotinate(out) + Na(+)(out) = nicotinate(in) + Na(+)(in). It carries out the reaction pyruvate(out) + Na(+)(out) = pyruvate(in) + Na(+)(in). The catalysed reaction is propanoate(out) + Na(+)(out) = propanoate(in) + Na(+)(in). It catalyses the reaction butanoate(out) + Na(+)(out) = butanoate(in) + Na(+)(in). The enzyme catalyses acetoacetate(out) + Na(+)(out) = acetoacetate(in) + Na(+)(in). Functionally, acts as an electroneutral and low-affinity sodium (Na(+))-dependent sodium-coupled solute transporter. Catalyzes the transport across the plasma membrane of many monocarboxylates such as lactate, pyruvate, nicotinate, propionate, butyrate and beta-D-hydroxybutyrate. In Danio rerio (Zebrafish), this protein is Sodium-coupled monocarboxylate transporter 2 (slc5a12).